The primary structure comprises 356 residues: Dual-specificity RNA methyltransferase RlmN (356 aa).

Residue E87 is the Proton acceptor of the active site. In terms of domain architecture, Radical SAM core spans 106–339 (QEAKYTICVS…CTIRDSKGID (234 aa)). C113 and C344 are oxidised to a cystine. [4Fe-4S] cluster contacts are provided by C120, C124, and C127. S-adenosyl-L-methionine contacts are provided by residues 170–171 (GE), S202, 225–227 (SLH), and N301. C344 serves as the catalytic S-methylcysteine intermediate.

Belongs to the radical SAM superfamily. RlmN family. Requires [4Fe-4S] cluster as cofactor.

It localises to the cytoplasm. It catalyses the reaction adenosine(2503) in 23S rRNA + 2 reduced [2Fe-2S]-[ferredoxin] + 2 S-adenosyl-L-methionine = 2-methyladenosine(2503) in 23S rRNA + 5'-deoxyadenosine + L-methionine + 2 oxidized [2Fe-2S]-[ferredoxin] + S-adenosyl-L-homocysteine. The catalysed reaction is adenosine(37) in tRNA + 2 reduced [2Fe-2S]-[ferredoxin] + 2 S-adenosyl-L-methionine = 2-methyladenosine(37) in tRNA + 5'-deoxyadenosine + L-methionine + 2 oxidized [2Fe-2S]-[ferredoxin] + S-adenosyl-L-homocysteine. Its function is as follows. Specifically methylates position 2 of adenine 2503 in 23S rRNA and position 2 of adenine 37 in tRNAs. m2A2503 modification seems to play a crucial role in the proofreading step occurring at the peptidyl transferase center and thus would serve to optimize ribosomal fidelity. The polypeptide is Dual-specificity RNA methyltransferase RlmN (Sulfurimonas denitrificans (strain ATCC 33889 / DSM 1251) (Thiomicrospira denitrificans (strain ATCC 33889 / DSM 1251))).